The sequence spans 69 residues: Guanine nucleotide-binding protein G(I)/G(S)/G(O) subunit gamma-T2 (69 aa).

At Cys66 the chain carries Cysteine methyl ester. A lipid anchor (S-farnesyl cysteine) is attached at Cys66. A propeptide spans 67 to 69 (LIS) (removed in mature form).

This sequence belongs to the G protein gamma family. In terms of assembly, g proteins are composed of 3 units, alpha, beta and gamma. Retinal cones.

It is found in the cell membrane. In terms of biological role, guanine nucleotide-binding proteins (G proteins) are involved as a modulator or transducer in various transmembrane signaling systems. The beta and gamma chains are required for the GTPase activity, for replacement of GDP by GTP, and for G protein-effector interaction. The chain is Guanine nucleotide-binding protein G(I)/G(S)/G(O) subunit gamma-T2 (GNGT2) from Homo sapiens (Human).